Reading from the N-terminus, the 161-residue chain is UPF0178 protein Rsph17025_3122 (161 aa).

The protein belongs to the UPF0178 family.

This Cereibacter sphaeroides (strain ATCC 17025 / ATH 2.4.3) (Rhodobacter sphaeroides) protein is UPF0178 protein Rsph17025_3122.